The primary structure comprises 334 residues: uncharacterized protein (334 aa).

2 consecutive transmembrane segments (helical) span residues 1–21 (MFRL…FTFI) and 46–66 (ILGL…IIII).

Its subcellular location is the cell membrane. This is an uncharacterized protein from Rickettsia prowazekii (strain Madrid E).